A 204-amino-acid chain; its full sequence is Large ribosomal subunit protein uL3c (204 aa).

The interval 126 to 155 (HNFTRGPMTHGSKNHREPGSIGQGSTPAKV) is disordered.

Belongs to the universal ribosomal protein uL3 family. Part of the 50S ribosomal subunit.

Its subcellular location is the plastid. It localises to the chloroplast. One of the primary rRNA binding proteins, it binds directly near the 3'-end of the 23S rRNA, where it nucleates assembly of the 50S subunit. This is Large ribosomal subunit protein uL3c (rpl3) from Guillardia theta (Cryptophyte).